The primary structure comprises 332 residues: Glycerol-3-phosphate dehydrogenase [NAD(P)+] (332 aa).

NADPH-binding residues include S14, W15, R35, and K107. Sn-glycerol 3-phosphate is bound by residues K107, G137, and S139. Position 141 (A141) interacts with NADPH. Positions 192, 245, 255, 256, and 257 each coordinate sn-glycerol 3-phosphate. The active-site Proton acceptor is K192. R256 contributes to the NADPH binding site. NADPH is bound by residues V280 and E282.

It belongs to the NAD-dependent glycerol-3-phosphate dehydrogenase family.

The protein localises to the cytoplasm. It carries out the reaction sn-glycerol 3-phosphate + NAD(+) = dihydroxyacetone phosphate + NADH + H(+). The enzyme catalyses sn-glycerol 3-phosphate + NADP(+) = dihydroxyacetone phosphate + NADPH + H(+). It participates in membrane lipid metabolism; glycerophospholipid metabolism. Catalyzes the reduction of the glycolytic intermediate dihydroxyacetone phosphate (DHAP) to sn-glycerol 3-phosphate (G3P), the key precursor for phospholipid synthesis. The polypeptide is Glycerol-3-phosphate dehydrogenase [NAD(P)+] (Desulfovibrio desulfuricans (strain ATCC 27774 / DSM 6949 / MB)).